Here is an 803-residue protein sequence, read N- to C-terminus: Translation initiation factor IF-2 (803 aa).

Disordered stretches follow at residues 95–125 and 138–178; these read PVVE…EKAE and EVKE…EREE. Residues 111–121 are compositionally biased toward polar residues; sequence VPLTSDTTNLN. Over residues 138-155 the composition is skewed to basic and acidic residues; that stretch reads EVKEEAKKTPSEKKETPK. The span at 156-167 shows a compositional bias: basic residues; sequence KGPRKETRRSRK. Residues 168–178 are compositionally biased toward basic and acidic residues; the sequence is PDKEDKWEREE. The tr-type G domain maps to 302–471; sequence PRAPVVTIMG…LLQAEVLELK (170 aa). Residues 311–318 are G1; sequence GHVDHGKT. 311–318 is a binding site for GTP; that stretch reads GHVDHGKT. The tract at residues 336–340 is G2; sequence GITQH. A G3 region spans residues 357–360; sequence DTPG. Residues 357–361 and 411–414 contribute to the GTP site; these read DTPGH and NKID. Positions 411-414 are G4; that stretch reads NKID. Positions 447 to 449 are G5; sequence SAK.

Belongs to the TRAFAC class translation factor GTPase superfamily. Classic translation factor GTPase family. IF-2 subfamily.

Its subcellular location is the cytoplasm. Its function is as follows. One of the essential components for the initiation of protein synthesis. Protects formylmethionyl-tRNA from spontaneous hydrolysis and promotes its binding to the 30S ribosomal subunits. Also involved in the hydrolysis of GTP during the formation of the 70S ribosomal complex. The chain is Translation initiation factor IF-2 from Coxiella burnetii (strain Dugway 5J108-111).